A 1208-amino-acid polypeptide reads, in one-letter code: Period circadian protein (1208 aa).

2 disordered regions span residues 1–171 and 214–235; these read MEGG…AAQS and GPGK…TGQR. Positions 16–47 are enriched in low complexity; it reads SDSAYSNSCSNSQSQRSGSSKSRLSGSHSSGS. A Nuclear localization signal motif is present at residues 66 to 79; the sequence is KRNKDKSRKKKKNK. Over residues 66–79 the composition is skewed to basic residues; it reads KRNKDKSRKKKKNK. Composition is skewed to basic and acidic residues over residues 129 to 139 and 147 to 164; these read QHGEDHSEPKA and EGDR…ENAA. Residues 217–232 are compositionally biased toward low complexity; the sequence is KVEPVPGVPGTAAAGT. 2 PAS domains span residues 242–377 and 395–501; these read ESFC…ATPI and FAIR…RVFQ. Disordered regions lie at residues 636–747, 802–821, 961–982, and 1076–1208; these read VTAP…SSNY, EYSG…WEGE, TSPT…EMPT, and VTTP…HGDG. Positions 679-697 are enriched in polar residues; that stretch reads NFTTASNIHMSSVTNTSIA. Tandem repeats lie at residues 698–699, 701–702, 703–704, 705–706, 707–708, 709–710, 711–712, 713–714, 715–716, 717–718, 719–720, 721–722, 723–724, 725–726, 727–728, 729–730, and 731–732. Residues 698–740 are compositionally biased toward gly residues; the sequence is GTGGTGTGTGTGTGTGTGTGTGTGTGTGTGTGTGNGTNSGTGT. The tract at residues 698–742 is 21 X 2 AA approximate tandem repeats of G-[TN]; that stretch reads GTGGTGTGTGTGTGTGTGTGTGTGTGTGTGTGTGNGTNSGTGTGS. An 18; approximate repeat occupies 734 to 735; the sequence is TN. Repeat copies occupy residues 737-738 and 739-740. The stretch at 741 to 742 is one 21; approximate repeat; the sequence is GS. Positions 1076 to 1092 are enriched in low complexity; sequence VTTPSQVQRSSSQSASV. Residues 1127 to 1138 are compositionally biased toward polar residues; sequence LPCSSSNPANNK. The segment covering 1142–1161 has biased composition (low complexity); the sequence is DSNGNSDDMDGSSFSSFYSS. Positions 1193-1208 are enriched in basic and acidic residues; sequence KIMEHPEEDQTQHGDG.

As to quaternary structure, forms a heterodimer with timeless (TIM); the complex then translocates into the nucleus. Post-translationally, phosphorylated with a circadian rhythmicity, probably by the double-time protein (dbt). Phosphorylation could be implicated in the stability of per monomer and in the formation of heterodimer per-tim.

Its subcellular location is the nucleus. It localises to the cytoplasm. The protein localises to the perinuclear region. In terms of biological role, essential for biological clock functions. Determines the period length of circadian and ultradian rhythms; an increase in PER dosage leads to shortened circadian rhythms and a decrease leads to lengthened circadian rhythms. Essential for the circadian rhythmicity of locomotor activity, eclosion behavior, and for the rhythmic component of the male courtship song that originates in the thoracic nervous system. The biological cycle depends on the rhythmic formation and nuclear localization of the TIM-PER complex. Light induces the degradation of TIM, which promotes elimination of PER. Nuclear activity of the heterodimer coordinatively regulates PER and TIM transcription through a negative feedback loop. Behaves as a negative element in circadian transcriptional loop. Does not appear to bind DNA, suggesting indirect transcriptional inhibition. The sequence is that of Period circadian protein (per) from Drosophila yakuba (Fruit fly).